The chain runs to 1715 residues: Pentafunctional AROM polypeptide (1715 aa).

Positions 1-17 are enriched in polar residues; that stretch reads MTSTASAQQPVLRTKTP. The disordered stretch occupies residues 1-26; it reads MTSTASAQQPVLRTKTPSYHAPPSTD. The 3-dehydroquinate synthase stretch occupies residues 1 to 421; that stretch reads MTSTASAQQP…VQNMASTVSD (421 aa). NAD(+)-binding positions include 71-73, 112-115, 143-145, and aspartate 148; these read DQN, EASK, and GGV. Arginine 159 contributes to the 7-phospho-2-dehydro-3-deoxy-D-arabino-heptonate binding site. 168-169 provides a ligand contact to NAD(+); the sequence is TT. The 7-phospho-2-dehydro-3-deoxy-D-arabino-heptonate site is built by aspartate 175 and lysine 181. Lysine 190 serves as a coordination point for NAD(+). 7-phospho-2-dehydro-3-deoxy-D-arabino-heptonate is bound at residue asparagine 191. Residues 208 to 211 and asparagine 219 contribute to the NAD(+) site; that span reads WLKT. Zn(2+) is bound at residue glutamate 223. 7-phospho-2-dehydro-3-deoxy-D-arabino-heptonate is bound by residues 223–226 and lysine 287; that span reads EVVK. The active-site Proton acceptor; for 3-dehydroquinate synthase activity is glutamate 297. 7-phospho-2-dehydro-3-deoxy-D-arabino-heptonate contacts are provided by residues 301–305 and histidine 308; that span reads RNLVN. Histidine 308 is a Zn(2+) binding site. Catalysis depends on histidine 312, which acts as the Proton acceptor; for 3-dehydroquinate synthase activity. Positions 324 and 393 each coordinate 7-phospho-2-dehydro-3-deoxy-D-arabino-heptonate. Histidine 324 provides a ligand contact to Zn(2+). The EPSP synthase stretch occupies residues 434-895; the sequence is VTPIHEQPNK…WDDLERKLGI (462 aa). Residue cysteine 877 is the For EPSP synthase activity of the active site. Residues 948 to 1165 are shikimate kinase; the sequence is HATIICIGMR…KGGRRTYFLS (218 aa). 955 to 962 contacts ATP; it reads GMRASGKT. The 3-dehydroquinase stretch occupies residues 1166 to 1389; sequence LTFPDVVPKL…AAPGQLSFRQ (224 aa). The active-site Proton acceptor; for 3-dehydroquinate dehydratase activity is the histidine 1292. The active-site Schiff-base intermediate with substrate; for 3-dehydroquinate dehydratase activity is lysine 1320. Positions 1402–1715 are shikimate dehydrogenase; sequence ARRFALFGSP…AAWDVYLQRC (314 aa).

This sequence in the N-terminal section; belongs to the sugar phosphate cyclases superfamily. Dehydroquinate synthase family. It in the 2nd section; belongs to the EPSP synthase family. In the 3rd section; belongs to the shikimate kinase family. The protein in the 4th section; belongs to the type-I 3-dehydroquinase family. This sequence in the C-terminal section; belongs to the shikimate dehydrogenase family. Homodimer. It depends on Zn(2+) as a cofactor.

The protein resides in the cytoplasm. The enzyme catalyses 7-phospho-2-dehydro-3-deoxy-D-arabino-heptonate = 3-dehydroquinate + phosphate. The catalysed reaction is 3-dehydroquinate = 3-dehydroshikimate + H2O. It carries out the reaction shikimate + NADP(+) = 3-dehydroshikimate + NADPH + H(+). It catalyses the reaction shikimate + ATP = 3-phosphoshikimate + ADP + H(+). The enzyme catalyses 3-phosphoshikimate + phosphoenolpyruvate = 5-O-(1-carboxyvinyl)-3-phosphoshikimate + phosphate. Its pathway is metabolic intermediate biosynthesis; chorismate biosynthesis; chorismate from D-erythrose 4-phosphate and phosphoenolpyruvate: step 2/7. The protein operates within metabolic intermediate biosynthesis; chorismate biosynthesis; chorismate from D-erythrose 4-phosphate and phosphoenolpyruvate: step 3/7. It functions in the pathway metabolic intermediate biosynthesis; chorismate biosynthesis; chorismate from D-erythrose 4-phosphate and phosphoenolpyruvate: step 4/7. It participates in metabolic intermediate biosynthesis; chorismate biosynthesis; chorismate from D-erythrose 4-phosphate and phosphoenolpyruvate: step 5/7. Its pathway is metabolic intermediate biosynthesis; chorismate biosynthesis; chorismate from D-erythrose 4-phosphate and phosphoenolpyruvate: step 6/7. Functionally, the AROM polypeptide catalyzes 5 consecutive enzymatic reactions in prechorismate polyaromatic amino acid biosynthesis. The chain is Pentafunctional AROM polypeptide from Mycosarcoma maydis (Corn smut fungus).